Consider the following 497-residue polypeptide: Catalase-2 (497 aa).

Catalysis depends on residues H71 and N144. Position 354 (Y354) interacts with heme.

This sequence belongs to the catalase family. Heme serves as cofactor.

The enzyme catalyses 2 H2O2 = O2 + 2 H2O. In terms of biological role, catalase involved in the oxidative stress response serving to protect cells from toxicity. For instance plays a role in defending against oxidative damage induced by excessive copper stress. Not required for maintaining normal lifespan. This is Catalase-2 from Caenorhabditis elegans.